Here is a 464-residue protein sequence, read N- to C-terminus: Mitogen-activated protein kinase 10 (464 aa).

In terms of domain architecture, Protein kinase spans 64 to 359 (YQNLKPIGSG…VDDALQHPYI (296 aa)). Residues 70–78 (IGSGAQGIV) and K93 each bind ATP. The Proton acceptor role is filled by D189. Phosphothreonine; by MAP2K7 is present on T221. The TXY motif lies at 221 to 223 (TPY). Y223 bears the Phosphotyrosine; by MAP2K4 mark. Residues 405 to 464 (TKNGVVKGQPSPSGAAVNSSESLPPSSSVNDISSMSTDQTLASDTDSSLEASAGPLGCCR) are disordered. The span at 423–432 (SSESLPPSSS) shows a compositional bias: low complexity. Positions 433–454 (VNDISSMSTDQTLASDTDSSLE) are enriched in polar residues. Residues C462 and C463 are each lipidated (S-palmitoyl cysteine).

It belongs to the protein kinase superfamily. CMGC Ser/Thr protein kinase family. MAP kinase subfamily. Interacts with MAPKBP1. Interacts with MAPK8IP1/JIP-1 and MAPK8IP3/JIP-3/JSAP1. Interacts with SPAG9/MAPK8IP4/JIP4. Interacts with HDAC9. Interacts with ARRB2; the interaction enhances MAPK10 activation by MAP3K5. Interacts with SARM1. Interacts with JUND; interaction is inhibited in the presence of MEN1. Mg(2+) is required as a cofactor. Post-translationally, dually phosphorylated on Thr-221 and Tyr-223 by MAP2K4 and MAP2K7, which activates the enzyme. MAP2K7 shows a strong preference for Thr-221 while MAP2K4 phosphorylates Tyr-223 preferentially. Weakly autophosphorylated on threonine and tyrosine residues in vitro. In terms of processing, palmitoylation regulates subcellular location and axonal development. In terms of tissue distribution, specific to a subset of neurons in the nervous system. Present in the hippocampus and areas, cerebellum, striatum, brain stem, and weakly in the spinal cord. Very weak expression in testis and kidney.

Its subcellular location is the cytoplasm. The protein resides in the membrane. It is found in the nucleus. The protein localises to the mitochondrion. It carries out the reaction L-seryl-[protein] + ATP = O-phospho-L-seryl-[protein] + ADP + H(+). It catalyses the reaction L-threonyl-[protein] + ATP = O-phospho-L-threonyl-[protein] + ADP + H(+). Its activity is regulated as follows. Activated by threonine and tyrosine phosphorylation by two dual specificity kinases, MAP2K4 and MAP2K7. MAP2K7 phosphorylates MAPK10 on Thr-221 causing a conformational change and a large increase in Vmax. MAP2K4 then phosphorylates Tyr-223 resulting in a further increase in Vmax. Inhibited by dual specificity phosphatases, such as DUSP1. Inhibited by HDAC9. Functionally, serine/threonine-protein kinase involved in various processes such as neuronal proliferation, differentiation, migration and programmed cell death. Extracellular stimuli such as pro-inflammatory cytokines or physical stress stimulate the stress-activated protein kinase/c-Jun N-terminal kinase (SAP/JNK) signaling pathway. In this cascade, two dual specificity kinases MAP2K4/MKK4 and MAP2K7/MKK7 phosphorylate and activate MAPK10/JNK3. In turn, MAPK10/JNK3 phosphorylates a number of transcription factors, primarily components of AP-1 such as JUN and ATF2 and thus regulates AP-1 transcriptional activity. Plays regulatory roles in the signaling pathways during neuronal apoptosis. Phosphorylates the neuronal microtubule regulator STMN2. Acts in the regulation of the amyloid-beta precursor protein/APP signaling during neuronal differentiation by phosphorylating APP. Also participates in neurite growth in spiral ganglion neurons. Phosphorylates the CLOCK-BMAL1 heterodimer and plays a role in the photic regulation of the circadian clock. Phosphorylates JUND and this phosphorylation is inhibited in the presence of MEN1. The chain is Mitogen-activated protein kinase 10 (MAPK10) from Homo sapiens (Human).